Reading from the N-terminus, the 360-residue chain is Phospho-N-acetylmuramoyl-pentapeptide-transferase (360 aa).

10 helical membrane-spanning segments follow: residues 26-46 (AIVSLLTALFISLWMGPRMIA), 72-92 (PTMGGIMILTAITVSVLLWAY), 94-114 (SNPYVWCVLTVLIGYGIIGFV), 132-152 (WKYFWMSVIALGVAFALYLAG), 168-188 (VMPQLGLLYILLAYFVIVGTG), 199-219 (GLAIMPTVFVAAGFALVAWAT), 236-256 (AGELVIVCTAIVGAGLGFLWF), 263-283 (VFMGDVGSLALGGALGIIAVL), 288-308 (FLLVIMGGVFVVETLSVILQV), and 338-358 (VIVRFWIISLMLVLIGLATLK).

Belongs to the glycosyltransferase 4 family. MraY subfamily. The cofactor is Mg(2+).

It localises to the cell inner membrane. The catalysed reaction is UDP-N-acetyl-alpha-D-muramoyl-L-alanyl-gamma-D-glutamyl-meso-2,6-diaminopimeloyl-D-alanyl-D-alanine + di-trans,octa-cis-undecaprenyl phosphate = di-trans,octa-cis-undecaprenyl diphospho-N-acetyl-alpha-D-muramoyl-L-alanyl-D-glutamyl-meso-2,6-diaminopimeloyl-D-alanyl-D-alanine + UMP. Its pathway is cell wall biogenesis; peptidoglycan biosynthesis. Functionally, catalyzes the initial step of the lipid cycle reactions in the biosynthesis of the cell wall peptidoglycan: transfers peptidoglycan precursor phospho-MurNAc-pentapeptide from UDP-MurNAc-pentapeptide onto the lipid carrier undecaprenyl phosphate, yielding undecaprenyl-pyrophosphoryl-MurNAc-pentapeptide, known as lipid I. The chain is Phospho-N-acetylmuramoyl-pentapeptide-transferase from Klebsiella pneumoniae (strain 342).